We begin with the raw amino-acid sequence, 376 residues long: DNA-directed RNA polymerase subunit alpha (376 aa).

Residues 1-259 (MSDCSQNLLY…KHFSIFEKMD (259 aa)) are alpha N-terminal domain (alpha-NTD). An alpha C-terminal domain (alpha-CTD) region spans residues 276–376 (KDDILHKLVL…DKIRSKNGKG (101 aa)).

Belongs to the RNA polymerase alpha chain family. Homodimer. The RNAP catalytic core consists of 2 alpha, 1 beta, 1 beta' and 1 omega subunit. When a sigma factor is associated with the core the holoenzyme is formed, which can initiate transcription.

The enzyme catalyses RNA(n) + a ribonucleoside 5'-triphosphate = RNA(n+1) + diphosphate. DNA-dependent RNA polymerase catalyzes the transcription of DNA into RNA using the four ribonucleoside triphosphates as substrates. The protein is DNA-directed RNA polymerase subunit alpha of Chlamydia abortus (strain DSM 27085 / S26/3) (Chlamydophila abortus).